A 153-amino-acid polypeptide reads, in one-letter code: Histone H2B.3 (153 aa).

2 stretches are compositionally biased toward basic and acidic residues: residues 1–28 (MAPK…EKAL) and 36–53 (EKRL…EGRK). The disordered stretch occupies residues 1 to 61 (MAPKAEKKPA…RKAGRKKAKK (61 aa)). N6-acetyllysine is present on residues Lys7 and Lys37. Lys149 participates in a covalent cross-link: Glycyl lysine isopeptide (Lys-Gly) (interchain with G-Cter in ubiquitin).

It belongs to the histone H2B family. As to quaternary structure, the nucleosome is a histone octamer containing two molecules each of H2A, H2B, H3 and H4 assembled in one H3-H4 heterotetramer and two H2A-H2B heterodimers. The octamer wraps approximately 147 bp of DNA. Post-translationally, can be acetylated to form H2BK6ac and H2BK33ac. In terms of processing, monoubiquitinated by BRE1 to form H2BK143ub1 and deubiquitinated by UBP26. Required for heterochromatic histone H3 di- and trimethylation at H3K4me. May give a specific tag for epigenetic transcriptional activation.

The protein localises to the nucleus. The protein resides in the chromosome. In terms of biological role, core component of nucleosome. Nucleosomes wrap and compact DNA into chromatin, limiting DNA accessibility to the cellular machineries which require DNA as a template. Histones thereby play a central role in transcription regulation, DNA repair, DNA replication and chromosomal stability. DNA accessibility is regulated via a complex set of post-translational modifications of histones, also called histone code, and nucleosome remodeling. This Oryza sativa subsp. indica (Rice) protein is Histone H2B.3 (H2B.3).